Reading from the N-terminus, the 238-residue chain is Probable transcriptional regulatory protein SZO_02930 (238 aa).

Belongs to the TACO1 family. YeeN subfamily.

It localises to the cytoplasm. The sequence is that of Probable transcriptional regulatory protein SZO_02930 from Streptococcus equi subsp. zooepidemicus (strain H70).